We begin with the raw amino-acid sequence, 101 residues long: CRISPR-associated endoribonuclease Cas2 (101 aa).

Mg(2+) is bound at residue Asp-8.

The protein belongs to the CRISPR-associated endoribonuclease Cas2 protein family. Homodimer, forms a heterotetramer with a Cas1 homodimer. Mg(2+) serves as cofactor.

Functionally, CRISPR (clustered regularly interspaced short palindromic repeat), is an adaptive immune system that provides protection against mobile genetic elements (viruses, transposable elements and conjugative plasmids). CRISPR clusters contain sequences complementary to antecedent mobile elements and target invading nucleic acids. CRISPR clusters are transcribed and processed into CRISPR RNA (crRNA). Functions as a ssRNA-specific endoribonuclease. Involved in the integration of spacer DNA into the CRISPR cassette. This Lacticaseibacillus rhamnosus (strain ATCC 53103 / LMG 18243 / GG) (Lactobacillus rhamnosus) protein is CRISPR-associated endoribonuclease Cas2.